The sequence spans 1527 residues: ATP-binding cassette sub-family C member 3 (1527 aa).

Residues 1-32 are Extracellular-facing; sequence MDALCGSGELGSKFWDSNLSVHTENPDLTPCF. N-linked (GlcNAc...) asparagine glycosylation is present at N18. A helical membrane pass occupies residues 33–53; the sequence is QNSLLAWVPCIYLWVALPCYL. Over 54–73 the chain is Cytoplasmic; that stretch reads LYLRHHCRGYIILSHLSKLK. The chain crosses the membrane as a helical span at residues 74-94; the sequence is MVLGVLLWCVSWADLFYSFHG. Topologically, residues 95–99 are extracellular; sequence LVHGR. A helical membrane pass occupies residues 100-120; the sequence is APAPVFFVTPLVVGVTMLLAT. The Cytoplasmic segment spans residues 121–132; sequence LLIQYERLQGVQ. Residues 133–153 form a helical membrane-spanning segment; it reads SSGVLIIFWFLCVVCAIVPFR. At 154-171 the chain is on the extracellular side; it reads SKILLAKAEGEISDPFRF. A helical transmembrane segment spans residues 172-192; the sequence is TTFYIHFALVLSALILACFRE. Topologically, residues 193–302 are cytoplasmic; sequence KPPFFSAKNV…RPRKPSFLKA (110 aa). The chain crosses the membrane as a helical span at residues 303–323; the sequence is LLATFGSSFLISACFKLIQDL. An ABC transmembrane type-1 1 domain is found at 311–594; sequence FLISACFKLI…LPQLISNLTQ (284 aa). Residues 324 to 349 lie on the Extracellular side of the membrane; it reads LSFINPQLLSILIRFISNPMAPSWWG. A helical transmembrane segment spans residues 350–370; sequence FLVAGLMFLCSMMQSLILQHY. At 371-426 the chain is on the cytoplasmic side; it reads YHYIFVTGVKFRTGIMGVIYRKALVITNSVKRASTVGEIVNLMSVDAQRFMDLAPF. Residues 427–447 traverse the membrane as a helical segment; it reads LNLLWSAPLQIILAIYFLWQN. The Extracellular segment spans residues 448–450; sequence LGP. A helical membrane pass occupies residues 451 to 471; sequence SVLAGVAFMVLLIPLNGAVAV. At 472 to 533 the chain is on the cytoplasmic side; sequence KMRAFQVKQM…LLRTAAYLHT (62 aa). Residues 534-554 traverse the membrane as a helical segment; the sequence is TTTFTWMCSPFLVTLITLWVY. The Extracellular portion of the chain corresponds to 555 to 576; sequence VYVDPNNVLDAEKAFVSVSLFN. A helical transmembrane segment spans residues 577 to 597; the sequence is ILRLPLNMLPQLISNLTQASV. The Cytoplasmic portion of the chain corresponds to 598 to 963; the sequence is SLKRIQQFLS…VELSVFWDYA (366 aa). One can recognise an ABC transporter 1 domain in the interval 629–851; it reads IHSGTFTWAQ…NGSFANFLCN (223 aa). 661-668 contacts ATP; the sequence is GPVGCGKS. Phosphoserine is present on residues S908 and S911. A disordered region spans residues 910–932; it reads LSSDGEGQGRPVPRRHLGPSEKV. The helical transmembrane segment at 964 to 984 threads the bilayer; the sequence is KAVGLCTTLAICLLYVGQSAA. The ABC transmembrane type-1 2 domain occupies 971-1252; sequence TLAICLLYVG…MIRMMSDLES (282 aa). Topologically, residues 985 to 1021 are extracellular; it reads AIGANVWLSAWTNDAMADSRQNNTSLRLGVYAALGIL. Residues N1006 and N1007 are each glycosylated (N-linked (GlcNAc...) asparagine). A helical membrane pass occupies residues 1022-1042; that stretch reads QGFLVMLAAMAMAAGGIQAAR. The Cytoplasmic portion of the chain corresponds to 1043-1085; the sequence is VLHQALLHNKIRSPQSFFDTTPSGRILNCFSKDIYVVDEVLAP. Residues 1086–1106 traverse the membrane as a helical segment; sequence VILMLLNSFFNAISTLVVIMA. Position 1107 (S1107) is a topological domain, extracellular. A helical membrane pass occupies residues 1108 to 1128; the sequence is TPLFTVVILPLAVLYTLVQRF. The Cytoplasmic segment spans residues 1129-1199; the sequence is YAATSRQLKR…ISNRWLSIGV (71 aa). Residues 1200 to 1220 traverse the membrane as a helical segment; it reads EFVGNCVVLFAALFAVIGRSS. Residues 1221–1222 lie on the Extracellular side of the membrane; sequence LN. Residues 1223 to 1243 traverse the membrane as a helical segment; sequence PGLVGLSVSYSLQVTFALNWM. At 1244–1527 the chain is on the cytoplasmic side; sequence IRMMSDLESN…YGMARDAGLA (284 aa). An ABC transporter 2 domain is found at 1291-1523; sequence FRNYSVRYRP…RGIFYGMARD (233 aa). 1323–1330 is a binding site for ATP; it reads GRTGAGKS.

It belongs to the ABC transporter superfamily. ABCC family. Conjugate transporter (TC 3.A.1.208) subfamily. In terms of tissue distribution, mainly expressed in the liver. Also expressed in small intestine, colon, prostate, testis, brain and at a lower level in the kidney. In testis, localized to peritubular myoid cells, Leydig cells, along the basal membrane of Sertoli cells and moderately in the adluminal compartment of the seminiferous tubules.

It localises to the basolateral cell membrane. The protein resides in the basal cell membrane. The enzyme catalyses taurocholate(in) + ATP + H2O = taurocholate(out) + ADP + phosphate + H(+). The catalysed reaction is glycocholate(in) + ATP + H2O = glycocholate(out) + ADP + phosphate + H(+). It catalyses the reaction taurolithocholate 3-sulfate(in) + ATP + H2O = taurolithocholate 3-sulfate(out) + ADP + phosphate + H(+). It carries out the reaction taurochenodeoxycholate 3-sulfate(in) + ATP + H2O = taurochenodeoxycholate 3-sulfate(out) + ADP + phosphate + H(+). The enzyme catalyses an S-substituted glutathione(in) + ATP + H2O = an S-substituted glutathione(out) + ADP + phosphate + H(+). The catalysed reaction is ATP + H2O + xenobioticSide 1 = ADP + phosphate + xenobioticSide 2.. It catalyses the reaction 17beta-estradiol 17-O-(beta-D-glucuronate)(in) + ATP + H2O = 17beta-estradiol 17-O-(beta-D-glucuronate)(out) + ADP + phosphate + H(+). It carries out the reaction dehydroepiandrosterone 3-sulfate(in) + ATP + H2O = dehydroepiandrosterone 3-sulfate(out) + ADP + phosphate + H(+). The enzyme catalyses leukotriene C4(in) + ATP + H2O = leukotriene C4(out) + ADP + phosphate + H(+). The catalysed reaction is (4Z,15Z)-bilirubin IXalpha C8-beta-D-glucuronoside(in) + ATP + H2O = (4Z,15Z)-bilirubin IXalpha C8-beta-D-glucuronoside(out) + ADP + phosphate + H(+). It catalyses the reaction (4Z,15Z)-bilirubin IXalpha C8,C12-beta-D-bisglucuronoside(in) + ATP + H2O = (4Z,15Z)-bilirubin IXalpha C8,C12-beta-D-bisglucuronoside(out) + ADP + phosphate + H(+). ATP-dependent transporter of the ATP-binding cassette (ABC) family that binds and hydrolyzes ATP to enable active transport of various substrates including many drugs, toxicants and endogenous compound across cell membranes. Transports glucuronide conjugates such as bilirubin diglucuronide, estradiol-17-beta-o-glucuronide and GSH conjugates such as leukotriene C4 (LTC4). Transports also various bile salts (taurocholate, glycocholate, taurochenodeoxycholate-3-sulfate, taurolithocholate- 3-sulfate). Does not contribute substantially to bile salt physiology but provides an alternative route for the export of bile acids and glucuronides from cholestatic hepatocytes. May contribute to regulate the transport of organic compounds in testes across the blood-testis-barrier. Can confer resistance to various anticancer drugs, methotrexate, tenoposide and etoposide, by decreasing accumulation of these drugs in cells. This Homo sapiens (Human) protein is ATP-binding cassette sub-family C member 3.